The primary structure comprises 185 residues: Lectin B4 (185 aa).

Asparagine 48 carries N-linked (GlcNAc...) asparagine glycosylation. 2 residues coordinate Mn(2+): glutamate 111 and aspartate 113. Ca(2+) is bound by residues aspartate 113, tyrosine 115, asparagine 117, and aspartate 120. A Mn(2+)-binding site is contributed by aspartate 120. N-linked (GlcNAc...) asparagine glycosylation is present at asparagine 122. Histidine 125 lines the Mn(2+) pocket.

Belongs to the leguminous lectin family. As to quaternary structure, homo- or heterotetramer. V.villosa isolectins are composed of either two subunits a and two subunits B (A2B2), four subunits A (A4), or four subunits B (B4). The predominant form, isolectin B4, has no A1 erythrocyte agglutinating activity.

In terms of biological role, N-acetyl-D-galactosamine specific lectin. Binds the Tn determinant (GalNAc-alpha-O-Ser/Thr) of the tumor-associated glycopeptide. Could be required for agglutinating cells such as Tn-exposed erythrocytes. The sequence is that of Lectin B4 from Vicia villosa (Hairy vetch).